We begin with the raw amino-acid sequence, 706 residues long: Gamma-adducin (706 aa).

Residues 1 to 10 (MSSDASQGVI) show a composition bias toward polar residues. The segment at 1 to 20 (MSSDASQGVITTPPPPSMPH) is disordered. The residue at position 2 (Ser2) is an N-acetylserine. 7 positions are modified to phosphoserine: Ser42, Ser64, Ser402, Ser414, Ser423, Ser442, and Ser461. Disordered stretches follow at residues 471–497 (AEDSSKVSGGTPIKIEDPNQFVPLNTN), 535–555 (PSTMQFEDDDHGPPAPPNPFS), 575–610 (GLEDAEQELLSDDASSVSQIQSQTQSPQNVPEKLEE), and 666–706 (EKIE…KVEA). Residue Lys484 forms a Glycyl lysine isopeptide (Lys-Gly) (interchain with G-Cter in SUMO2) linkage. Residues Ser585, Ser590, Ser673, Ser677, Ser679, Ser681, and Ser683 each carry the phosphoserine modification. The span at 589-602 (SSVSQIQSQTQSPQ) shows a compositional bias: low complexity. The segment covering 682–706 (PSKKKKKFRTPSFLKKNKKKEKVEA) has biased composition (basic residues). An interaction with calmodulin region spans residues 684-701 (KKKKKFRTPSFLKKNKKK).

The protein belongs to the aldolase class II family. Adducin subfamily. In terms of assembly, heterodimer of an alpha and a gamma subunit. Sumoylated. In terms of processing, proteolytically cleaved by asparagine endopeptidase (AEP) into 2 fragments. Overexpression of the 1-357 fragment induces neuronal apoptosis, and overexpression of either 1-357 or 358-706 fragment increases the degeneration of dendritic spines. Overexpression of the 1-357 fragment impairs neurite outgrowth by downregulating the expression of Rac2, and induces synaptic dysfunction and cognitive impairments in tau P301S transgenic mice, a mouse model for Alzheimer disease (AD). In terms of tissue distribution, ubiquitously expressed. As to expression, cleavage fragment 1-357 is abundantly expressed in the brain of patients with Alzheimer disease (AD), but hardly detectable in age-matched control individuals (at protein level).

The protein localises to the cytoplasm. It is found in the cytoskeleton. The protein resides in the cell membrane. In terms of biological role, membrane-cytoskeleton-associated protein that promotes the assembly of the spectrin-actin network. Plays a role in actin filament capping. Binds to calmodulin. Involved in myogenic reactivity of the renal afferent arteriole (Af-art), renal interlobular arteries and middle cerebral artery (MCA) to increased perfusion pressure. Involved in regulation of potassium channels in the vascular smooth muscle cells (VSMCs) of the Af-art and MCA ex vivo. Involved in regulation of glomerular capillary pressure, glomerular filtration rate (GFR) and glomerular nephrin expression in response to hypertension. Involved in renal blood flow (RBF) autoregulation. Plays a role in podocyte structure and function. Regulates globular monomer actin (G-actin) and filamentous polymer actin (F-actin) ratios in the primary podocytes affecting actin cytoskeleton organization. Regulates expression of synaptopodin, RhoA, Rac1 and CDC42 in the renal cortex and the primary podocytes. Regulates expression of nephrin in the glomeruli and in the primary podocytes, expression of nephrin and podocinin in the renal cortex, and expression of focal adhesion proteins integrin alpha-3 and integrin beta-1 in the glomeruli. Involved in cell migration and cell adhesion of podocytes, and in podocyte foot process effacement. Regulates expression of profibrotics markers MMP2, MMP9, TGF beta-1, tubular tight junction protein E-cadherin, and mesenchymal markers vimentin and alpha-SMA. Promotes the growth of neurites. The polypeptide is Gamma-adducin (ADD3) (Homo sapiens (Human)).